The primary structure comprises 178 residues: Large ribosomal subunit protein uL10 (178 aa).

Belongs to the universal ribosomal protein uL10 family. As to quaternary structure, part of the ribosomal stalk of the 50S ribosomal subunit. The N-terminus interacts with L11 and the large rRNA to form the base of the stalk. The C-terminus forms an elongated spine to which L12 dimers bind in a sequential fashion forming a multimeric L10(L12)X complex.

In terms of biological role, forms part of the ribosomal stalk, playing a central role in the interaction of the ribosome with GTP-bound translation factors. In Dictyoglomus thermophilum (strain ATCC 35947 / DSM 3960 / H-6-12), this protein is Large ribosomal subunit protein uL10.